We begin with the raw amino-acid sequence, 73 residues long: Sec-independent protein translocase protein TatA (73 aa).

Residues 1–21 traverse the membrane as a helical segment; the sequence is MGSFSIWHWMIVLVIVLLVFG.

This sequence belongs to the TatA/E family. The Tat system comprises two distinct complexes: a TatABC complex, containing multiple copies of TatA, TatB and TatC subunits, and a separate TatA complex, containing only TatA subunits. Substrates initially bind to the TatABC complex, which probably triggers association of the separate TatA complex to form the active translocon.

Its subcellular location is the cell inner membrane. Its function is as follows. Part of the twin-arginine translocation (Tat) system that transports large folded proteins containing a characteristic twin-arginine motif in their signal peptide across membranes. TatA could form the protein-conducting channel of the Tat system. The polypeptide is Sec-independent protein translocase protein TatA (Mesorhizobium japonicum (strain LMG 29417 / CECT 9101 / MAFF 303099) (Mesorhizobium loti (strain MAFF 303099))).